A 603-amino-acid polypeptide reads, in one-letter code: MFRAQQNAFDDAVAKATDENLTSENWEYILDVCDKVAAEESGAKDAVAAMIKRLAHRNANVQLYTLELANALAQNCGPKIHRELASRSFTDALLRLANDRNTHQQVKPKILERMQEWAQMFANNPDFGIMEQAYMKLKTQNPNLQPPSKPGKREITEADRQKEEEELQMALALSIREKPSAAPEPKAEPSTSASVPASQTQAATSQAVPPGTSAATVSRVRALFDFQPSEPGELQFRKGDIIAVLESVYKDWWKGSLRGQTGIFPLNYVEKLPDPTVEELQREAQMEAEVFGQIKNVEKLLTLLSTRSSELNVQDNEEITALYHSTLSIRPKLIELIGKYSQKKDEFTQLNEKFIKARRDYESLLEASMSHPAQPQYGRPGQTPYGYPGPAAPLGYPQGPPQSDPQRYFSPRPQDQTHMYPPTSHSPDPRGRTPPAGPSFPQHQQPPPDSYQPVHHRPESTYDNPQELGTSVYDSPVEHPSSSQRLPYPPSGAPVPPGVHQQFQHQQQEYPPSGYPPEDASKPPTAGFASQPPQQTLQQPPYPTAPVAHQPPPSHQPPPVPSTASKPTPYPSLTPGTPSGGEYQAYNPSQAGAANSNPNSYYR.

In terms of domain architecture, VHS spans 16-145 (ATDENLTSEN…KLKTQNPNLQ (130 aa)). 2 disordered regions span residues 140-164 (QNPN…QKEE) and 177-212 (EKPS…PPGT). The span at 151–163 (GKREITEADRQKE) shows a compositional bias: basic and acidic residues. Positions 162–181 (KEEEELQMALALSIREKPSA) constitute a UIM domain. Positions 180–210 (SAAPEPKAEPSTSASVPASQTQAATSQAVPP) are enriched in low complexity. Residues 215–274 (ATVSRVRALFDFQPSEPGELQFRKGDIIAVLESVYKDWWKGSLRGQTGIFPLNYVEKLPD) form the SH3 domain. Residues 371 to 603 (HPAQPQYGRP…ANSNPNSYYR (233 aa)) are disordered. Low complexity predominate over residues 374–397 (QPQYGRPGQTPYGYPGPAAPLGYP). A compositionally biased stretch (polar residues) spans 461–473 (TYDNPQELGTSVY). Residues 487 to 497 (PYPPSGAPVPP) are compositionally biased toward pro residues. Residues 498–508 (GVHQQFQHQQQ) show a composition bias toward low complexity. Pro residues predominate over residues 540 to 561 (PPYPTAPVAHQPPPSHQPPPVP). Over residues 586 to 603 (YNPSQAGAANSNPNSYYR) the composition is skewed to polar residues.

This sequence belongs to the STAM family. Component of the ESCRT-0 complex composed of HSE1 and VPS27.

It is found in the endosome membrane. Functionally, component of the ESCRT-0 complex which is the sorting receptor for ubiquitinated cargo proteins at the multivesicular body (MVB). The chain is Class E vacuolar protein-sorting machinery protein hse1 (hse1) from Neosartorya fischeri (strain ATCC 1020 / DSM 3700 / CBS 544.65 / FGSC A1164 / JCM 1740 / NRRL 181 / WB 181) (Aspergillus fischerianus).